We begin with the raw amino-acid sequence, 725 residues long: Eukaryotic translation initiation factor 3 subunit B (725 aa).

The 85-residue stretch at 46–130 (NCVFIAGIPV…HTFTARSFKD (85 aa)) folds into the RRM domain. 6 WD repeats span residues 202–240 (RANW…RAHR), 242–280 (AHTN…SLRI), 354–395 (VNIE…SMQR), 462–504 (PLSE…HAPK), 510–552 (DAGV…AKRT), and 554–594 (VIEH…FTFQ).

Belongs to the eIF-3 subunit B family. Component of the eukaryotic translation initiation factor 3 (eIF-3) complex.

The protein resides in the cytoplasm. RNA-binding component of the eukaryotic translation initiation factor 3 (eIF-3) complex, which is involved in protein synthesis of a specialized repertoire of mRNAs and, together with other initiation factors, stimulates binding of mRNA and methionyl-tRNAi to the 40S ribosome. The eIF-3 complex specifically targets and initiates translation of a subset of mRNAs involved in cell proliferation. This is Eukaryotic translation initiation factor 3 subunit B from Caenorhabditis elegans.